The sequence spans 62 residues: uncharacterized protein (62 aa).

It is found in the plastid. The protein resides in the chloroplast. This is an uncharacterized protein from Porphyra purpurea (Red seaweed).